The sequence spans 192 residues: Adenylate kinase (192 aa).

ATP is bound at residue 12 to 17 (GSGKTT). An NMP region spans residues 34–63 (STGDLLRAEVASGSELGKTIDSFISKGNLV). Residues T35, R40, 61–63 (NLV), 88–91 (GYPR), and Q95 contribute to the AMP site. The LID stretch occupies residues 130 to 136 (GRNRGTD). An ATP-binding site is contributed by R131. R133 and R145 together coordinate AMP. R173 serves as a coordination point for ATP.

It belongs to the adenylate kinase family. In terms of assembly, monomer.

It is found in the cytoplasm. It carries out the reaction AMP + ATP = 2 ADP. The protein operates within purine metabolism; AMP biosynthesis via salvage pathway; AMP from ADP: step 1/1. Functionally, catalyzes the reversible transfer of the terminal phosphate group between ATP and AMP. Plays an important role in cellular energy homeostasis and in adenine nucleotide metabolism. In Campylobacter jejuni (strain RM1221), this protein is Adenylate kinase.